We begin with the raw amino-acid sequence, 118 residues long: Beta-elicitin cryptogein (118 aa).

Residues 1–20 (MNFTALLAAVAAALVGSANA) form the signal peptide. Cystine bridges form between Cys23–Cys91, Cys47–Cys76, and Cys71–Cys115.

The protein belongs to the elicitin family.

It is found in the secreted. Its function is as follows. Induces local and distal defense responses (incompatible hypersensitive reaction) in plants from the solanaceae and cruciferae families. Elicits leaf necrosis and causes the accumulation of pathogenesis-related proteins. Might interact with the lipidic molecules of the plasma membrane. This chain is Beta-elicitin cryptogein, found in Phytophthora cryptogea.